Consider the following 303-residue polypeptide: Mesenteric estrogen-dependent adipogenesis protein (303 aa).

As to expression, highly expressed in the visceral fat depot.

The protein resides in the cytoplasm. Involved in processes that promote adipocyte differentiation, lipid accumulation, and glucose uptake in mature adipocytes. The polypeptide is Mesenteric estrogen-dependent adipogenesis protein (MEDAG) (Homo sapiens (Human)).